Here is a 78-residue protein sequence, read N- to C-terminus: Acyl carrier protein (78 aa).

The Carrier domain maps to 2 to 77 (SDILERVRKI…DAVKFITEKT (76 aa)). The residue at position 37 (S37) is an O-(pantetheine 4'-phosphoryl)serine.

This sequence belongs to the acyl carrier protein (ACP) family. Post-translationally, 4'-phosphopantetheine is transferred from CoA to a specific serine of apo-ACP by AcpS. This modification is essential for activity because fatty acids are bound in thioester linkage to the sulfhydryl of the prosthetic group.

It is found in the cytoplasm. It participates in lipid metabolism; fatty acid biosynthesis. Functionally, carrier of the growing fatty acid chain in fatty acid biosynthesis. This is Acyl carrier protein from Caulobacter vibrioides (strain ATCC 19089 / CIP 103742 / CB 15) (Caulobacter crescentus).